A 498-amino-acid chain; its full sequence is Minor fimbrium subunit Mfa1 (498 aa).

The N-terminal stretch at 1–19 is a signal peptide; the sequence is MKLNKMFLVGALLSLGFAS. C20 carries N-palmitoyl cysteine lipidation. C20 carries the S-diacylglycerol cysteine lipid modification. Residues 20–50 constitute a propeptide that is removed on maturation; it reads CSKEGNGPAPDSSSTADTHMSVSMSLPQHNR. The disordered stretch occupies residues 436-476; it reads SGNPFVPTDPDPNNPDTPDNPDTPDPEDPDTPNPEEPLPVQ.

Belongs to the bacteroidetes fimbrillin superfamily. FimA/Mfa1 family. Structural component of the fimbrial stalk. Minor fimbriae are composed of a structural subunit, such as the 53 kDa fimbrillin, and the accessory subunits Mfa3, Mfa4 and Mfa5. Fimbrium assembly occurs by linear, head-to-tail oligomerization of fimbrial subunits. This is mediated via insertion of a C-terminal beta-strand from one subunit into a groove in the N-terminal domain of the following subunit.

It localises to the fimbrium. Its subcellular location is the cell outer membrane. In terms of biological role, structural subunit of the minor fimbriae. These filamentous pili are attached to the cell surface; they mediate biofilm formation, adhesion onto host cells and onto other bacteria that are part of the oral microbiome. They play an important role in invasion of periodontal tissues and are recognized as major virulence factors. Mfa1 orthologs from different strains have highly divergent sequences, and this correlates with pathogenicity. The chain is Minor fimbrium subunit Mfa1 from Porphyromonas gingivalis (Bacteroides gingivalis).